The following is a 727-amino-acid chain: Glycerol-3-phosphate dehydrogenase, mitochondrial (727 aa).

Residues 1–42 constitute a mitochondrion transit peptide; the sequence is MAFQKVVKGTILMGGGALATVLGLSQFAHYRRKQVSLAYVEA. 71–99 contributes to the FAD binding site; the sequence is DILVIGGGATGCGCALDAVTRGLKTALVE. Tyr601 carries the post-translational modification Phosphotyrosine. EF-hand domains are found at residues 623-658 and 659-694; these read PDID…INVQ and MDED…VHTG. Residues Asp672, Asn674, Asn676, Gln678, and Glu683 each contribute to the Ca(2+) site.

Belongs to the FAD-dependent glycerol-3-phosphate dehydrogenase family. Requires FAD as cofactor.

Its subcellular location is the mitochondrion. It carries out the reaction a quinone + sn-glycerol 3-phosphate = dihydroxyacetone phosphate + a quinol. It functions in the pathway polyol metabolism; glycerol degradation via glycerol kinase pathway; glycerone phosphate from sn-glycerol 3-phosphate (anaerobic route): step 1/1. Calcium-binding enhance the activity of the enzyme. Its function is as follows. Calcium-responsive mitochondrial glycerol-3-phosphate dehydrogenase which seems to be a key component of the pancreatic beta-cell glucose-sensing device. This is Glycerol-3-phosphate dehydrogenase, mitochondrial from Rattus norvegicus (Rat).